The following is a 407-amino-acid chain: 8-amino-7-oxononanoate synthase (407 aa).

Position 24 (arginine 24) interacts with substrate. 111-112 serves as a coordination point for pyridoxal 5'-phosphate; the sequence is GF. Residue histidine 137 participates in substrate binding. Pyridoxal 5'-phosphate is bound by residues serine 183, histidine 211, and threonine 239. Residue lysine 242 is modified to N6-(pyridoxal phosphate)lysine. Threonine 356 is a substrate binding site.

It belongs to the class-II pyridoxal-phosphate-dependent aminotransferase family. BioF subfamily. As to quaternary structure, homodimer. Pyridoxal 5'-phosphate serves as cofactor.

The enzyme catalyses 6-carboxyhexanoyl-[ACP] + L-alanine + H(+) = (8S)-8-amino-7-oxononanoate + holo-[ACP] + CO2. It functions in the pathway cofactor biosynthesis; biotin biosynthesis. In terms of biological role, catalyzes the decarboxylative condensation of pimeloyl-[acyl-carrier protein] and L-alanine to produce 8-amino-7-oxononanoate (AON), [acyl-carrier protein], and carbon dioxide. The protein is 8-amino-7-oxononanoate synthase of Stenotrophomonas maltophilia (strain R551-3).